A 303-amino-acid chain; its full sequence is Mycothiol acetyltransferase (303 aa).

A 1D-myo-inositol 2-(L-cysteinylamino)-2-deoxy-alpha-D-glucopyranoside-binding site is contributed by Asp33. Acetyl-CoA is bound by residues 78–80 and 86–91; these read VVV and RRGTGS. The 154-residue stretch at 150 to 303 folds into the N-acetyltransferase domain; that stretch reads VRFATYSGPH…AYAAVAPTDV (154 aa). Residues Glu177, Lys218, and Glu226 each contribute to the 1D-myo-inositol 2-(L-cysteinylamino)-2-deoxy-alpha-D-glucopyranoside site. An acetyl-CoA-binding site is contributed by 230-232; that stretch reads VGV. 1D-myo-inositol 2-(L-cysteinylamino)-2-deoxy-alpha-D-glucopyranoside is bound at residue Tyr269. 274–279 is an acetyl-CoA binding site; it reads NTAAVK.

The protein belongs to the acetyltransferase family. MshD subfamily. As to quaternary structure, monomer.

The enzyme catalyses 1D-myo-inositol 2-(L-cysteinylamino)-2-deoxy-alpha-D-glucopyranoside + acetyl-CoA = mycothiol + CoA + H(+). Catalyzes the transfer of acetyl from acetyl-CoA to desacetylmycothiol (Cys-GlcN-Ins) to form mycothiol. The sequence is that of Mycothiol acetyltransferase from Mycolicibacterium gilvum (strain PYR-GCK) (Mycobacterium gilvum (strain PYR-GCK)).